A 121-amino-acid chain; its full sequence is Large ribosomal subunit protein uL14 (121 aa).

This sequence belongs to the universal ribosomal protein uL14 family. Part of the 50S ribosomal subunit. Forms a cluster with proteins L3 and L19. In the 70S ribosome, L14 and L19 interact and together make contacts with the 16S rRNA in bridges B5 and B8.

Functionally, binds to 23S rRNA. Forms part of two intersubunit bridges in the 70S ribosome. In Prochlorococcus marinus (strain NATL1A), this protein is Large ribosomal subunit protein uL14.